Here is a 244-residue protein sequence, read N- to C-terminus: Centromere protein H (244 aa).

Position 1 is an N-acetylmethionine (Met1). A disordered region spans residues 1–33; that stretch reads METQSEEQAVTKPADSGGEGGPPQVAGAQAARP. The residue at position 16 (Ser16) is a Phosphoserine. The segment covering 22 to 31 has biased composition (low complexity); that stretch reads PPQVAGAQAA. Residue Lys64 forms a Glycyl lysine isopeptide (Lys-Gly) (interchain with G-Cter in SUMO2) linkage. Thr65 carries the phosphothreonine modification. Coiled coils occupy residues 66–104 and 146–189; these read PEQI…DRMQ and DLEE…MENS.

Belongs to the CENP-H/MCM16 family. In terms of assembly, self-associates. Component of the CENPA-NAC complex, at least composed of CENPA, CENPC, CENPH, CENPM, CENPN, CENPT and CENPU. The CENPA-NAC complex interacts with the CENPA-CAD complex, composed of CENPI, CENPK, CENPL, CENPO, CENPP, CENPQ, CENPR and CENPS. Interacts with KIF2C and NDC80.

Its subcellular location is the nucleus. The protein resides in the chromosome. The protein localises to the centromere. It localises to the kinetochore. Its function is as follows. Component of the CENPA-NAC (nucleosome-associated) complex, a complex that plays a central role in assembly of kinetochore proteins, mitotic progression and chromosome segregation. The CENPA-NAC complex recruits the CENPA-CAD (nucleosome distal) complex and may be involved in incorporation of newly synthesized CENPA into centromeres. The protein is Centromere protein H (CENPH) of Bos taurus (Bovine).